Reading from the N-terminus, the 258-residue chain is Imidazole glycerol phosphate synthase subunit HisF (258 aa).

Active-site residues include Asp-11 and Asp-130.

It belongs to the HisA/HisF family. As to quaternary structure, heterodimer of HisH and HisF.

The protein resides in the cytoplasm. The catalysed reaction is 5-[(5-phospho-1-deoxy-D-ribulos-1-ylimino)methylamino]-1-(5-phospho-beta-D-ribosyl)imidazole-4-carboxamide + L-glutamine = D-erythro-1-(imidazol-4-yl)glycerol 3-phosphate + 5-amino-1-(5-phospho-beta-D-ribosyl)imidazole-4-carboxamide + L-glutamate + H(+). It functions in the pathway amino-acid biosynthesis; L-histidine biosynthesis; L-histidine from 5-phospho-alpha-D-ribose 1-diphosphate: step 5/9. Functionally, IGPS catalyzes the conversion of PRFAR and glutamine to IGP, AICAR and glutamate. The HisF subunit catalyzes the cyclization activity that produces IGP and AICAR from PRFAR using the ammonia provided by the HisH subunit. The polypeptide is Imidazole glycerol phosphate synthase subunit HisF (Rhodopseudomonas palustris (strain BisB18)).